The primary structure comprises 275 residues: Ribosomal RNA small subunit methyltransferase A (275 aa).

Residues Asn21, Leu23, Gly48, Glu69, Asp94, and Asn115 each contribute to the S-adenosyl-L-methionine site.

The protein belongs to the class I-like SAM-binding methyltransferase superfamily. rRNA adenine N(6)-methyltransferase family. RsmA subfamily.

It localises to the cytoplasm. The enzyme catalyses adenosine(1518)/adenosine(1519) in 16S rRNA + 4 S-adenosyl-L-methionine = N(6)-dimethyladenosine(1518)/N(6)-dimethyladenosine(1519) in 16S rRNA + 4 S-adenosyl-L-homocysteine + 4 H(+). In terms of biological role, specifically dimethylates two adjacent adenosines (A1518 and A1519) in the loop of a conserved hairpin near the 3'-end of 16S rRNA in the 30S particle. May play a critical role in biogenesis of 30S subunits. This is Ribosomal RNA small subunit methyltransferase A from Clostridium botulinum (strain Langeland / NCTC 10281 / Type F).